We begin with the raw amino-acid sequence, 325 residues long: Interferon regulatory factor 1 (325 aa).

Positions 5 to 113 form a DNA-binding region, IRF tryptophan pentad repeat; that stretch reads RMRMRPWLEM…SAVRVYRMLP (109 aa). Position 78 is an N6-acetyllysine (K78). Positions 92 to 165 are disordered; the sequence is EEVKDQSRNK…TLPDDHSSYT (74 aa). Polar residues predominate over residues 141 to 157; sequence GDSSPDTFSDGLSSSTL. Residues K275 and K299 each participate in a glycyl lysine isopeptide (Lys-Gly) (interchain with G-Cter in SUMO) cross-link.

Belongs to the IRF family. In terms of assembly, monomer. Homodimer. Interacts with EP300. Interacts with MYD88. Interacts with PIAS3. Interacts with SPOP. Post-translationally, phosphorylated by CK2 and this positively regulates its activity. In terms of processing, sumoylation represses the transcriptional activity and displays enhanced resistance to protein degradation. Sumoylated by UBE2I/UBC9 and SUMO1. Inactivates the tumor suppressor activity. Elevated levels in tumor cells. Major site is Lys-275. Sumoylation is enhanced by PIAS3. Desumoylated by SENP1 in tumor cells and appears to compete with ubiquitination on C-terminal sites. Ubiquitinated in a SPOP-depedent manner. Appears to compete with sumoylation on C-terminal sites.

The protein resides in the nucleus. It is found in the cytoplasm. Its activity is regulated as follows. Activated by MYD88. Its function is as follows. Transcriptional regulator which displays a remarkable functional diversity in the regulation of cellular responses. Regulates transcription of IFN and IFN-inducible genes, host response to viral and bacterial infections, regulation of many genes expressed during hematopoiesis, inflammation, immune responses and cell proliferation and differentiation, regulation of the cell cycle and induction of growth arrest and programmed cell death following DNA damage. Stimulates both innate and acquired immune responses through the activation of specific target genes and can act as a transcriptional activator and repressor regulating target genes by binding to an interferon-stimulated response element (ISRE) in their promoters. Has an essentail role in IFNG-dependent immunity to mycobacteria. Competes with the transcriptional repressor ZBED2 for binding to a common consensus sequence in gene promoters. Its target genes for transcriptional activation activity include: genes involved in anti-viral response, such as IFN-alpha/beta, RIGI, TNFSF10/TRAIL, ZBP1, OAS1/2, PIAS1/GBP, EIF2AK2/PKR and RSAD2/viperin; antibacterial response, such as GBP2, GBP5 and NOS2/INOS; anti-proliferative response, such as p53/TP53, LOX and CDKN1A; apoptosis, such as BBC3/PUMA, CASP1, CASP7 and CASP8; immune response, such as IL7, IL12A/B and IL15, PTGS2/COX2 and CYBB; DNA damage responses and DNA repair, such as POLQ/POLH; MHC class I expression, such as TAP1, PSMB9/LMP2, PSME1/PA28A, PSME2/PA28B and B2M and MHC class II expression, such as CIITA; metabolic enzymes, such as ACOD1/IRG1. Represses genes involved in anti-proliferative response, such as BIRC5/survivin, CCNB1, CCNE1, CDK1, CDK2 and CDK4 and in immune response, such as FOXP3, IL4, ANXA2 and TLR4. Stimulates p53/TP53-dependent transcription through enhanced recruitment of EP300 leading to increased acetylation of p53/TP53. Plays an important role in immune response directly affecting NK maturation and activity, macrophage production of IL12, Th1 development and maturation of CD8+ T-cells. Also implicated in the differentiation and maturation of dendritic cells and in the suppression of regulatory T (Treg) cells development. Acts as a tumor suppressor and plays a role not only in antagonism of tumor cell growth but also in stimulating an immune response against tumor cells. This is Interferon regulatory factor 1 (IRF1) from Homo sapiens (Human).